Here is a 266-residue protein sequence, read N- to C-terminus: MNKPIGVIDSGVGGLTVAKEIMRQLPNETIYYLGDIARCPYGPRPGDEVKQFTTQLANKLMQFDIKMLVIACNTATAVALEHLQQMLPIPVIGVIEPGSRTAIMTTKNQNVLILGTEGTIKSEAYRHHIKHINPNVHVYGVACPGFVPLVEQMRYDDPTITSIVIHQTLKQWRNTDADTIILGCTHYPLLYKPINDYFGGEKKVISSGLETAREVSALLTFSNEHASYTQHPEHRFFATGDTVHIKNIILQWLKLDVEVERISVDE.

Substrate-binding positions include 9–10 (DS) and 41–42 (YG). Cysteine 72 acts as the Proton donor/acceptor in catalysis. 73 to 74 (NT) serves as a coordination point for substrate. The Proton donor/acceptor role is filled by cysteine 184. A substrate-binding site is contributed by 185–186 (TH).

It belongs to the aspartate/glutamate racemases family.

The enzyme catalyses L-glutamate = D-glutamate. It functions in the pathway cell wall biogenesis; peptidoglycan biosynthesis. Provides the (R)-glutamate required for cell wall biosynthesis. The polypeptide is Glutamate racemase (Staphylococcus haemolyticus (strain JCSC1435)).